Consider the following 149-residue polypeptide: Nucleoside deoxyribosyltransferase (149 aa).

Residue Glu-90 is the Nucleophile of the active site.

It belongs to the nucleoside deoxyribosyltransferase family.

It catalyses the reaction 2-deoxy-D-ribosyl-base(1) + base(2) = 2-deoxy-D-ribosyl-base(2) + base(1).. Its pathway is nucleotide metabolism; nucleotide salvage pathway. Catalyzes the cleavage of the glycosidic bond of 2'-deoxyribonucleosides and the transfer of the deoxyribosyl moiety to an acceptor purine or pyrimidine base. The polypeptide is Nucleoside deoxyribosyltransferase (ntd) (Lactobacillus johnsonii (strain CNCM I-12250 / La1 / NCC 533)).